The sequence spans 177 residues: NADH-quinone oxidoreductase subunit B (177 aa).

Cys56, Cys57, Cys121, and Cys151 together coordinate [4Fe-4S] cluster.

It belongs to the complex I 20 kDa subunit family. In terms of assembly, NDH-1 is composed of 14 different subunits. Subunits NuoB, C, D, E, F, and G constitute the peripheral sector of the complex. [4Fe-4S] cluster is required as a cofactor.

It is found in the cell inner membrane. It carries out the reaction a quinone + NADH + 5 H(+)(in) = a quinol + NAD(+) + 4 H(+)(out). NDH-1 shuttles electrons from NADH, via FMN and iron-sulfur (Fe-S) centers, to quinones in the respiratory chain. Couples the redox reaction to proton translocation (for every two electrons transferred, four hydrogen ions are translocated across the cytoplasmic membrane), and thus conserves the redox energy in a proton gradient. This is NADH-quinone oxidoreductase subunit B from Jannaschia sp. (strain CCS1).